We begin with the raw amino-acid sequence, 723 residues long: Methionine--tRNA ligase (723 aa).

The 'HIGH' region signature appears at 12 to 22 (PYANGDIHLGH). Zn(2+)-binding residues include C143, C146, C156, and C159. Positions 345 to 349 (KMSKS) match the 'KMSKS' region motif. K348 provides a ligand contact to ATP. Positions 568-604 (PAAATAPAKDAKPAKEAGSQQRHAEKQQHAAGVSETA) are disordered. Residues 612–723 (DFTKVDLRIA…EGAQAGMRVK (112 aa)) form the tRNA-binding domain.

Belongs to the class-I aminoacyl-tRNA synthetase family. MetG type 1 subfamily. As to quaternary structure, homodimer. Zn(2+) is required as a cofactor.

The protein resides in the cytoplasm. It catalyses the reaction tRNA(Met) + L-methionine + ATP = L-methionyl-tRNA(Met) + AMP + diphosphate. Functionally, is required not only for elongation of protein synthesis but also for the initiation of all mRNA translation through initiator tRNA(fMet) aminoacylation. This chain is Methionine--tRNA ligase, found in Azoarcus sp. (strain BH72).